Here is a 742-residue protein sequence, read N- to C-terminus: Zinc finger protein 280C (742 aa).

Glycyl lysine isopeptide (Lys-Gly) (interchain with G-Cter in SUMO2) cross-links involve residues Lys-10, Lys-23, Lys-42, Lys-65, Lys-85, Lys-123, and Lys-135. Residues 138-168 (FTKTSPQEDSGACSVSQSDSTQDIPSSNILQ) show a composition bias toward polar residues. The tract at residues 138 to 243 (FTKTSPQEDS…QSAPGSSSLR (106 aa)) is disordered. Residues Lys-180, Lys-186, and Lys-193 each participate in a glycyl lysine isopeptide (Lys-Gly) (interchain with G-Cter in SUMO2) cross-link. Residues 182-191 (PSTSKVNSVN) are compositionally biased toward polar residues. Residues 200–222 (SISETRPCSSSSSQTAPSGASSQ) are compositionally biased toward low complexity. Positions 223–243 (TVLSNVNTSSVQSAPGSSSLR) are enriched in polar residues. 5 C2H2-type zinc fingers span residues 323–345 (FKCF…MKHH), 360–383 (TTCQ…ESTH), 390–413 (TICK…KDTH), 420–443 (YICQ…RSSH), and 477–499 (YRCP…KLEH). Residues 523–578 (LGSSQSRASSPPSSTIPSTSLQLSVPKSKSTTTKNNSKVSANKATTTSPQTVATTT) are compositionally biased toward low complexity. The tract at residues 523–608 (LGSSQSRASS…YKQKRQRTRK (86 aa)) is disordered. The span at 579–592 (GKPSASKPGTGTTK) shows a compositional bias: polar residues. Lys-580 participates in a covalent cross-link: Glycyl lysine isopeptide (Lys-Gly) (interchain with G-Cter in SUMO2). The segment covering 593 to 608 (SKAKPSYKQKRQRTRK) has biased composition (basic residues).

The protein resides in the nucleus. Its function is as follows. May function as a transcription factor. The protein is Zinc finger protein 280C (Znf280c) of Mus musculus (Mouse).